A 94-amino-acid polypeptide reads, in one-letter code: Adaptation to cold protein J (94 aa).

Residues 3–93 (NHFSVLGIKP…AMRELWDQFY (91 aa)) form the J domain. An essential for interaction with AtcC region spans residues 74-94 (NNVIVTDPNSAMRELWDQFYP).

Interacts via its C-terminal extension with AtcC. Does not interact with AtcA and AtcB.

Involved in cold adaptation. The J-domain is functional and can stimulate the ATPase activity of the DnaK chaperone. May work as a co-chaperone of the DnaK system to support cold resistance. The protein is Adaptation to cold protein J of Shewanella oneidensis (strain ATCC 700550 / JCM 31522 / CIP 106686 / LMG 19005 / NCIMB 14063 / MR-1).